A 177-amino-acid chain; its full sequence is Large ribosomal subunit protein uL6 (177 aa).

The protein belongs to the universal ribosomal protein uL6 family. Part of the 50S ribosomal subunit.

Its function is as follows. This protein binds to the 23S rRNA, and is important in its secondary structure. It is located near the subunit interface in the base of the L7/L12 stalk, and near the tRNA binding site of the peptidyltransferase center. In Roseobacter denitrificans (strain ATCC 33942 / OCh 114) (Erythrobacter sp. (strain OCh 114)), this protein is Large ribosomal subunit protein uL6.